Consider the following 829-residue polypeptide: Cap-specific mRNA (nucleoside-2'-O-)-methyltransferase 1 (829 aa).

Positions 1–68 (MKRAAQASDE…DSQNSQGSMA (68 aa)) are disordered. Positions 2-16 (KRAAQASDEPLKKRK) match the Bipartite nuclear localization signal motif. Residues 31 to 44 (QRTTSQDSSQSESL) are compositionally biased toward low complexity. A compositionally biased stretch (polar residues) spans 55–68 (SRPSDSQNSQGSMA). The G-patch domain maps to 79-125 (YNNVSQKLMAKMGFREGEGLGKYGQGRKEIVEASTQRGRRGLGLMLK). Residues 195-199 (KTVFD) and R210 contribute to the substrate site. The 220-residue stretch at 223-442 (FFLNRAAMKM…ERYVVCKGLK (220 aa)) folds into the RrmJ-type SAM-dependent 2'-O-MTase domain. N226 lines the S-adenosyl-L-methionine pocket. Residue K231 is part of the active site. Residues 269–275 (CAGPGGF) and 327–328 (DI) each bind S-adenosyl-L-methionine. Residue D356 is part of the active site. 366 to 368 (NLQ) contacts substrate. K396 functions as the Proton acceptor in the catalytic mechanism. N431 is a substrate binding site. The 35-residue stretch at 745-779 (KTVNDPWTMAFSKSSKRKFFYNKQTKESTYDLPAT) folds into the WW domain.

It localises to the nucleus. The catalysed reaction is a 5'-end (N(7)-methyl 5'-triphosphoguanosine)-ribonucleoside in mRNA + S-adenosyl-L-methionine = a 5'-end (N(7)-methyl 5'-triphosphoguanosine)-(2'-O-methyl-ribonucleoside) in mRNA + S-adenosyl-L-homocysteine + H(+). Functionally, S-adenosyl-L-methionine-dependent methyltransferase that mediates mRNA cap1 2'-O-ribose methylation to the 5'-cap structure of mRNAs. Methylates the ribose of the first nucleotide of a m(7)GpppG-capped mRNA and small nuclear RNA (snRNA) to produce m(7)GpppRm (cap1). Displays a preference for cap0 transcripts. Cap1 modification is linked to higher levels of translation. May be involved in the interferon response pathway. The protein is Cap-specific mRNA (nucleoside-2'-O-)-methyltransferase 1 (cmtr1) of Danio rerio (Zebrafish).